Consider the following 1051-residue polypeptide: Carbamoyl phosphate synthase large chain (1051 aa).

Residues 1-399 (MKETPKKVLV…SLQKAVRMLD (399 aa)) are carboxyphosphate synthetic domain. The ATP site is built by R127, R167, G173, G174, K206, L208, E213, G239, V240, H241, Q282, and E296. Residues 131–325 (RETMIENNLP…LAYVSAKLAL (195 aa)) enclose the ATP-grasp 1 domain. Residues Q282, E296, and N298 each contribute to the Mg(2+) site. 3 residues coordinate Mn(2+): Q282, E296, and N298. The segment at 400-548 (IGEPGVVGGK…LTYNGTEDDL (149 aa)) is oligomerization domain. The tract at residues 549–930 (EFSQGNKLLM…LKSWLSSIPN (382 aa)) is carbamoyl phosphate synthetic domain. The ATP-grasp 2 domain maps to 673–863 (SKLLDKLGIS…LINESMKAIF (191 aa)). The ATP site is built by R709, K748, I750, E755, G779, V780, H781, S782, Q822, and E834. Mg(2+) is bound by residues Q822, E834, and N836. Mn(2+) contacts are provided by Q822, E834, and N836. In terms of domain architecture, MGS-like spans 930-1051 (NRIPNKNGIA…FEISEYGGGI (122 aa)). The interval 931 to 1051 (RIPNKNGIAL…FEISEYGGGI (121 aa)) is allosteric domain.

This sequence belongs to the CarB family. As to quaternary structure, composed of two chains; the small (or glutamine) chain promotes the hydrolysis of glutamine to ammonia, which is used by the large (or ammonia) chain to synthesize carbamoyl phosphate. Tetramer of heterodimers (alpha,beta)4. Mg(2+) serves as cofactor. It depends on Mn(2+) as a cofactor.

The enzyme catalyses hydrogencarbonate + L-glutamine + 2 ATP + H2O = carbamoyl phosphate + L-glutamate + 2 ADP + phosphate + 2 H(+). It carries out the reaction hydrogencarbonate + NH4(+) + 2 ATP = carbamoyl phosphate + 2 ADP + phosphate + 2 H(+). The protein operates within amino-acid biosynthesis; L-arginine biosynthesis; carbamoyl phosphate from bicarbonate: step 1/1. It participates in pyrimidine metabolism; UMP biosynthesis via de novo pathway; (S)-dihydroorotate from bicarbonate: step 1/3. In terms of biological role, large subunit of the glutamine-dependent carbamoyl phosphate synthetase (CPSase). CPSase catalyzes the formation of carbamoyl phosphate from the ammonia moiety of glutamine, carbonate, and phosphate donated by ATP, constituting the first step of 2 biosynthetic pathways, one leading to arginine and/or urea and the other to pyrimidine nucleotides. The large subunit (synthetase) binds the substrates ammonia (free or transferred from glutamine from the small subunit), hydrogencarbonate and ATP and carries out an ATP-coupled ligase reaction, activating hydrogencarbonate by forming carboxy phosphate which reacts with ammonia to form carbamoyl phosphate. In Saccharolobus islandicus (strain M.16.4 / Kamchatka #3) (Sulfolobus islandicus), this protein is Carbamoyl phosphate synthase large chain.